We begin with the raw amino-acid sequence, 510 residues long: ATP synthase subunit alpha (510 aa).

169–176 (GDRQTGKT) serves as a coordination point for ATP.

The protein belongs to the ATPase alpha/beta chains family. In terms of assembly, F-type ATPases have 2 components, CF(1) - the catalytic core - and CF(0) - the membrane proton channel. CF(1) has five subunits: alpha(3), beta(3), gamma(1), delta(1), epsilon(1). CF(0) has three main subunits: a(1), b(2) and c(9-12). The alpha and beta chains form an alternating ring which encloses part of the gamma chain. CF(1) is attached to CF(0) by a central stalk formed by the gamma and epsilon chains, while a peripheral stalk is formed by the delta and b chains.

It localises to the cell membrane. The catalysed reaction is ATP + H2O + 4 H(+)(in) = ADP + phosphate + 5 H(+)(out). Produces ATP from ADP in the presence of a proton gradient across the membrane. The alpha chain is a regulatory subunit. This chain is ATP synthase subunit alpha, found in Thermomicrobium roseum (strain ATCC 27502 / DSM 5159 / P-2).